Reading from the N-terminus, the 258-residue chain is MDGIIEQKSVLVHSKISDAGKRNGLINTRNFMAESRDGLVSVYPAPQYQSHRLVASAAPGSLEGGRSEPVQQLLDPNTLQQSVESHYRPNIILYSDGVLRSWGDGVATDCCETTFIEDRSPTKDSLEYPDGKFIDLSGDDIKIHTLSYDVEEEEELQELESDYSSDTESEDNFLMMPPRDHLGLSVFSMLCCFWPLGIAAFYLSHETNKAVAKGDFHQASTSSRRALFLAVLSITIGTGIYVGVAVALIAYLSKNNHL.

The Cytoplasmic segment spans residues 1 to 181 (MDGIIEQKSV…NFLMMPPRDH (181 aa)). A Phosphoserine modification is found at serine 137. Residues 182-202 (LGLSVFSMLCCFWPLGIAAFY) form a helical membrane-spanning segment. Residues 203-228 (LSHETNKAVAKGDFHQASTSSRRALF) are Extracellular-facing. The segment at residues 229-249 (LAVLSITIGTGIYVGVAVALI) is an intramembrane region (helical). The Extracellular segment spans residues 250–258 (AYLSKNNHL).

Belongs to the CD225/Dispanin family. As to quaternary structure, homodimer. Interacts with GRIA1 and GRIA2. Brain-specific. Expressed in Purkinje neurons in cerebellum. Also detected in the hippocampus. Found at excitatory synapses and postsynaptic cells.

Its subcellular location is the cell membrane. The protein resides in the early endosome membrane. It localises to the postsynaptic density membrane. The protein localises to the synapse. It is found in the cell projection. Its subcellular location is the dendrite. The protein resides in the dendritic spine. May regulate AMPA receptor content at nascent synapses, and have a role in postsynaptic development and maturation. The chain is Synapse differentiation-inducing gene protein 1 (Syndig1) from Mus musculus (Mouse).